Reading from the N-terminus, the 230-residue chain is 2,3-bisphosphoglycerate-dependent phosphoglycerate mutase (230 aa).

Substrate contacts are provided by residues R10–N17, T23–G24, R62, E89–Y92, K100, R116–R117, and G185–N186. H11 acts as the Tele-phosphohistidine intermediate in catalysis. The active-site Proton donor/acceptor is the E89.

This sequence belongs to the phosphoglycerate mutase family. BPG-dependent PGAM subfamily. Homodimer.

The catalysed reaction is (2R)-2-phosphoglycerate = (2R)-3-phosphoglycerate. It participates in carbohydrate degradation; glycolysis; pyruvate from D-glyceraldehyde 3-phosphate: step 3/5. Functionally, catalyzes the interconversion of 2-phosphoglycerate and 3-phosphoglycerate. The chain is 2,3-bisphosphoglycerate-dependent phosphoglycerate mutase from Buchnera aphidicola subsp. Cinara cedri (strain Cc).